A 400-amino-acid chain; its full sequence is Riboflavin biosynthesis protein RibBA (400 aa).

The interval 1-202 (MTTFGTIEQA…IADLVMYRRR (202 aa)) is DHBP synthase. D-ribulose 5-phosphate contacts are provided by residues 28–29 (RE), aspartate 33, 141–145 (RTGHT), and glutamate 165. Position 29 (glutamate 29) interacts with Mg(2+). Histidine 144 contributes to the Mg(2+) binding site. Positions 203-400 (TEKQVELVAE…KRDRMGHLLG (198 aa)) are GTP cyclohydrolase II. 253–257 (RAHSE) is a binding site for GTP. Positions 258, 269, and 271 each coordinate Zn(2+). Residues glutamine 274, 297-299 (EGR), and threonine 319 contribute to the GTP site. Aspartate 331 functions as the Proton acceptor; for GTP cyclohydrolase activity in the catalytic mechanism. Residue arginine 333 is the Nucleophile; for GTP cyclohydrolase activity of the active site. GTP-binding residues include threonine 354 and lysine 359.

In the N-terminal section; belongs to the DHBP synthase family. It in the C-terminal section; belongs to the GTP cyclohydrolase II family. It depends on Mg(2+) as a cofactor. The cofactor is Mn(2+). Zn(2+) is required as a cofactor.

It catalyses the reaction D-ribulose 5-phosphate = (2S)-2-hydroxy-3-oxobutyl phosphate + formate + H(+). The catalysed reaction is GTP + 4 H2O = 2,5-diamino-6-hydroxy-4-(5-phosphoribosylamino)-pyrimidine + formate + 2 phosphate + 3 H(+). The protein operates within cofactor biosynthesis; riboflavin biosynthesis; 2-hydroxy-3-oxobutyl phosphate from D-ribulose 5-phosphate: step 1/1. Its pathway is cofactor biosynthesis; riboflavin biosynthesis; 5-amino-6-(D-ribitylamino)uracil from GTP: step 1/4. Functionally, catalyzes the conversion of D-ribulose 5-phosphate to formate and 3,4-dihydroxy-2-butanone 4-phosphate. Its function is as follows. Catalyzes the conversion of GTP to 2,5-diamino-6-ribosylamino-4(3H)-pyrimidinone 5'-phosphate (DARP), formate and pyrophosphate. This Salinispora tropica (strain ATCC BAA-916 / DSM 44818 / JCM 13857 / NBRC 105044 / CNB-440) protein is Riboflavin biosynthesis protein RibBA.